Consider the following 555-residue polypeptide: Glutamine--tRNA ligase (555 aa).

The 'HIGH' region motif lies at 34–44; it reads PEPNGYLHIGH. ATP contacts are provided by residues 35–37 and 41–47; these read EPN and HIGHAKS. Residues aspartate 67 and tyrosine 212 each contribute to the L-glutamine site. ATP is bound by residues threonine 231, 261–262, and 269–271; these read RL and MSK. The short motif at 268–272 is the 'KMSKS' region element; the sequence is VMSKR.

It belongs to the class-I aminoacyl-tRNA synthetase family. Monomer.

Its subcellular location is the cytoplasm. The catalysed reaction is tRNA(Gln) + L-glutamine + ATP = L-glutaminyl-tRNA(Gln) + AMP + diphosphate. The chain is Glutamine--tRNA ligase from Proteus mirabilis (strain HI4320).